Consider the following 943-residue polypeptide: Glutamate receptor ionotropic, NMDA 1 (943 aa).

An N-terminal signal peptide occupies residues M1–A20. Residues A21–Q580 lie on the Extracellular side of the membrane. N61, N224, N260, N297, N321, N371, N389, N461, N492, and N512 each carry an N-linked (GlcNAc...) asparagine glycan. An intrachain disulfide couples C79 to C329. Cystine bridges form between C441/C475 and C457/C476. The glycine site is built by P537, T539, and R544. The chain crosses the membrane as a helical span at residues S581–L601. Topologically, residues D602–T623 are cytoplasmic. The segment at residues L624–P645 is an intramembrane region (discontinuously helical). Positions L624–P645 are pore-forming. Topologically, residues R646–R651 are cytoplasmic. A helical transmembrane segment spans residues I652–Y668. Residues T669–N833 are Extracellular-facing. N-linked (GlcNAc...) asparagine glycosylation is present at N695. S709 and D753 together coordinate glycine. Residues C765 and C819 are joined by a disulfide bond. A glycan (N-linked (GlcNAc...) asparagine) is linked at N792. The chain crosses the membrane as a helical span at residues M834–I854. The Cytoplasmic segment spans residues E855–V943. Phosphoserine is present on residues S910, S911, S917, and S918.

This sequence belongs to the glutamate-gated ion channel (TC 1.A.10.1) family. NR1/GRIN1 subfamily. As to quaternary structure, heterotetramer; the NMDAR subunits are modular and harbor tiered domains that function in concert to regulate opening and closing of the cation-selective ion channel pore. Forms heterotetrameric channels composed of two GluN1/zeta subunits (GRIN1), and two identical GluN2/epsilon subunits (GRIN2A, GRIN2B, GRIN2C or GRIN2D) or GluN3 subunits (GRIN3A or GRIN3B) (in vitro). Can also form heterotetrameric channels that contain at least two GluN1 subunits and at least two different GluN2 subunits (or a combination of one GluN2 and one GluN3 subunits) (in vitro). In vivo, the subunit composition may vary in function of the expression levels of the different subunits. Found in a complex with GRIN2A or GRIN2B, GRIN3A and PPP2CB. Found in a complex with GRIN2A or GRIN2B and GRIN3B. Interacts with SNX27 (via PDZ domain); the interaction is required for recycling to the plasma membrane when endocytosed and prevent degradation in lysosomes. Interacts with DLG4 and MPDZ. Interacts with LRFN1 and LRFN2. Interacts with MYZAP. Found in a complex with DLG4 and PRR7. Found in a complex with GRIN2B and PRR7. Interacts with PRR7; the interaction is reduced following NMDA receptor activity. In terms of processing, NMDA is probably regulated by C-terminal phosphorylation of an isoform of GRIN1 by PKC. Dephosphorylated on Ser-897 probably by protein phosphatase 2A (PPP2CB). Its phosphorylated state is influenced by the formation of the NMDAR-PPP2CB complex and the NMDAR channel activity.

The protein resides in the cell membrane. The protein localises to the postsynaptic cell membrane. Its subcellular location is the postsynaptic density membrane. It is found in the synaptic cell membrane. It catalyses the reaction Ca(2+)(in) = Ca(2+)(out). It carries out the reaction Na(+)(in) = Na(+)(out). The catalysed reaction is K(+)(in) = K(+)(out). Component of N-methyl-D-aspartate (NMDA) receptors (NMDARs) that function as heterotetrameric, ligand-gated cation channels with high calcium permeability and voltage-dependent block by Mg(2+). NMDARs participate in synaptic plasticity for learning and memory formation by contributing to the long-term potentiation (LTP). Channel activation requires binding of the neurotransmitter L-glutamate to the GluN2 subunit, glycine or D-serine binding to the GluN1 subunit, plus membrane depolarization to eliminate channel inhibition by Mg(2+). NMDARs mediate simultaneously the potasium efflux and the influx of calcium and sodium. Each GluN2 or GluN3 subunit confers differential attributes to channel properties, including activation, deactivation and desensitization kinetics, pH sensitivity, Ca2(+) permeability, and binding to allosteric modulators. The GluN3 subunits confer distinctive ion channel activation mechanism, which relies exclusively on glycine and does not involve glutamate. The chain is Glutamate receptor ionotropic, NMDA 1 from Canis lupus familiaris (Dog).